The chain runs to 351 residues: DNA polymerase IV (351 aa).

The 182-residue stretch at Ile4–Gly185 folds into the UmuC domain. Mg(2+)-binding residues include Asp8 and Asp103. The active site involves Glu104.

This sequence belongs to the DNA polymerase type-Y family. Monomer. It depends on Mg(2+) as a cofactor.

The protein localises to the cytoplasm. The catalysed reaction is DNA(n) + a 2'-deoxyribonucleoside 5'-triphosphate = DNA(n+1) + diphosphate. Poorly processive, error-prone DNA polymerase involved in untargeted mutagenesis. Copies undamaged DNA at stalled replication forks, which arise in vivo from mismatched or misaligned primer ends. These misaligned primers can be extended by PolIV. Exhibits no 3'-5' exonuclease (proofreading) activity. May be involved in translesional synthesis, in conjunction with the beta clamp from PolIII. The chain is DNA polymerase IV from Cronobacter sakazakii (strain ATCC BAA-894) (Enterobacter sakazakii).